The chain runs to 260 residues: 5'-nucleotidase SurE (260 aa).

A divalent metal cation contacts are provided by Asp-10, Asp-11, Ser-41, and Asn-95.

The protein belongs to the SurE nucleotidase family. Requires a divalent metal cation as cofactor.

The protein localises to the cytoplasm. The enzyme catalyses a ribonucleoside 5'-phosphate + H2O = a ribonucleoside + phosphate. In terms of biological role, nucleotidase that shows phosphatase activity on nucleoside 5'-monophosphates. The polypeptide is 5'-nucleotidase SurE (Methanoregula boonei (strain DSM 21154 / JCM 14090 / 6A8)).